The chain runs to 122 residues: Large ribosomal subunit protein uL14 (122 aa).

Belongs to the universal ribosomal protein uL14 family. As to quaternary structure, part of the 50S ribosomal subunit. Forms a cluster with proteins L3 and L19. In the 70S ribosome, L14 and L19 interact and together make contacts with the 16S rRNA in bridges B5 and B8.

In terms of biological role, binds to 23S rRNA. Forms part of two intersubunit bridges in the 70S ribosome. This chain is Large ribosomal subunit protein uL14, found in Gluconobacter oxydans (strain 621H) (Gluconobacter suboxydans).